The following is a 485-amino-acid chain: Cysteine--tRNA ligase (485 aa).

Residue C27 participates in Zn(2+) binding. Residues 29-39 carry the 'HIGH' region motif; sequence ITAYDLCHLGH. 3 residues coordinate Zn(2+): C208, H233, and E237. The 'KMSKS' region signature appears at 265-269; the sequence is KMSKS. Residue K268 participates in ATP binding.

Belongs to the class-I aminoacyl-tRNA synthetase family. In terms of assembly, monomer. Zn(2+) serves as cofactor.

The protein resides in the cytoplasm. The enzyme catalyses tRNA(Cys) + L-cysteine + ATP = L-cysteinyl-tRNA(Cys) + AMP + diphosphate. This chain is Cysteine--tRNA ligase, found in Oleidesulfovibrio alaskensis (strain ATCC BAA-1058 / DSM 17464 / G20) (Desulfovibrio alaskensis).